The primary structure comprises 488 residues: F-box protein At3g60790 (488 aa).

The segment at Met1 to Pro21 is disordered. The region spanning Val49–Asp95 is the F-box domain.

The polypeptide is F-box protein At3g60790 (Arabidopsis thaliana (Mouse-ear cress)).